Here is a 508-residue protein sequence, read N- to C-terminus: Photosystem II CP47 reaction center protein (508 aa).

6 helical membrane passes run 21–36, 101–115, 140–156, 203–218, 237–252, and 457–472; these read AVHLMHTSLVSGWAGS, IVLSGLLFAASIWHW, GIHLFLSGVLCFGFGAF, IAAGILGVLAGLFHLC, VLSSSIAAVFWAAFVV, and CFALLFFFGHIWHGAR.

This sequence belongs to the PsbB/PsbC family. PsbB subfamily. PSII is composed of 1 copy each of membrane proteins PsbA, PsbB, PsbC, PsbD, PsbE, PsbF, PsbH, PsbI, PsbJ, PsbK, PsbL, PsbM, PsbT, PsbX, PsbY, PsbZ, Psb30/Ycf12, at least 3 peripheral proteins of the oxygen-evolving complex and a large number of cofactors. It forms dimeric complexes. Binds multiple chlorophylls. PSII binds additional chlorophylls, carotenoids and specific lipids. serves as cofactor.

It localises to the plastid. The protein resides in the chloroplast thylakoid membrane. In terms of biological role, one of the components of the core complex of photosystem II (PSII). It binds chlorophyll and helps catalyze the primary light-induced photochemical processes of PSII. PSII is a light-driven water:plastoquinone oxidoreductase, using light energy to abstract electrons from H(2)O, generating O(2) and a proton gradient subsequently used for ATP formation. The polypeptide is Photosystem II CP47 reaction center protein (Chlorella vulgaris (Green alga)).